The primary structure comprises 887 residues: Pyruvate dehydrogenase E1 component (887 aa).

In terms of assembly, homodimer. Part of the PDH complex, consisting of multiple copies of pyruvate dehydrogenase (E1), dihydrolipoamide acetyltransferase (E2) and lipoamide dehydrogenase (E3). Thiamine diphosphate serves as cofactor.

The catalysed reaction is N(6)-[(R)-lipoyl]-L-lysyl-[protein] + pyruvate + H(+) = N(6)-[(R)-S(8)-acetyldihydrolipoyl]-L-lysyl-[protein] + CO2. Component of the pyruvate dehydrogenase (PDH) complex, that catalyzes the overall conversion of pyruvate to acetyl-CoA and CO(2). The polypeptide is Pyruvate dehydrogenase E1 component (aceE) (Buchnera aphidicola subsp. Acyrthosiphon pisum (strain APS) (Acyrthosiphon pisum symbiotic bacterium)).